The primary structure comprises 570 residues: Hydroxylamine reductase (570 aa).

4 residues coordinate [4Fe-4S] cluster: C5, C8, C17, and C23. 8 residues coordinate hybrid [4Fe-2O-2S] cluster: H266, E290, C334, C425, C453, C478, E513, and K515. Cysteine persulfide is present on C425.

Belongs to the HCP family. It depends on [4Fe-4S] cluster as a cofactor. Requires hybrid [4Fe-2O-2S] cluster as cofactor.

The protein resides in the cytoplasm. The catalysed reaction is A + NH4(+) + H2O = hydroxylamine + AH2 + H(+). Functionally, catalyzes the reduction of hydroxylamine to form NH(3) and H(2)O. The chain is Hydroxylamine reductase from Clostridium botulinum (strain Kyoto / Type A2).